Reading from the N-terminus, the 377-residue chain is Chaperone protein DnaJ (377 aa).

The J domain maps to 5–70; it reads DYYEVLGLQK…QKRAAYDQYG (66 aa). The CR-type zinc finger occupies 134-212; the sequence is GCKKDIRLST…CHGDGRVQKA (79 aa). Zn(2+) contacts are provided by C147, C150, C164, C167, C186, C189, C200, and C203. CXXCXGXG motif repeat units lie at residues 147-154, 164-171, 186-193, and 200-207; these read CDNCHGTG, CPHCHGAG, CPSCHGTG, and CHSCHGDG.

Belongs to the DnaJ family. Homodimer. It depends on Zn(2+) as a cofactor.

The protein resides in the cytoplasm. Participates actively in the response to hyperosmotic and heat shock by preventing the aggregation of stress-denatured proteins and by disaggregating proteins, also in an autonomous, DnaK-independent fashion. Unfolded proteins bind initially to DnaJ; upon interaction with the DnaJ-bound protein, DnaK hydrolyzes its bound ATP, resulting in the formation of a stable complex. GrpE releases ADP from DnaK; ATP binding to DnaK triggers the release of the substrate protein, thus completing the reaction cycle. Several rounds of ATP-dependent interactions between DnaJ, DnaK and GrpE are required for fully efficient folding. Also involved, together with DnaK and GrpE, in the DNA replication of plasmids through activation of initiation proteins. The protein is Chaperone protein DnaJ of Haemophilus ducreyi (strain 35000HP / ATCC 700724).